The following is a 393-amino-acid chain: UDP-sulfoquinovose synthase (393 aa).

NAD(+) is bound by residues 31-35, 74-75, Arg100, and Asn118; these read DNLST and DI. Arg100 lines the substrate pocket. Residues Thr144 and Tyr182 each coordinate substrate. Thr144 is a catalytic residue. Residues Tyr182 and Lys186 each coordinate NAD(+). Tyr182 acts as the Proton acceptor in catalysis. Residue Lys186 is part of the active site. Substrate is bound at residue Gln209. Val212 lines the NAD(+) pocket. Substrate is bound by residues 238 to 241, 253 to 255, and 326 to 328; these read VVNR, TVY, and RVE.

This sequence belongs to the NAD(P)-dependent epimerase/dehydratase family. Requires NAD(+) as cofactor.

It carries out the reaction sulfite + UDP-alpha-D-glucose + H(+) = UDP-alpha-D-6-sulfoquinovose + H2O. Its function is as follows. Catalyzes the biosynthesis of UDP-sulfoquinovose by the transfer of sulfite to UDP-glucose. Important for the assembly of the S-layer N-glycans. The reaction probably occurs through an NAD(+)-dependent oxidation/dehydration/enolization/sulfite addition process. In vitro, in the absence of sulfite, UDP-D-glucose is converted via UDP-4-keto-D-glucose to UDP-D-glucose-5,6-ene. The protein is UDP-sulfoquinovose synthase of Sulfolobus acidocaldarius (strain ATCC 33909 / DSM 639 / JCM 8929 / NBRC 15157 / NCIMB 11770).